The primary structure comprises 319 residues: Beta-ketoacyl-[acyl-carrier-protein] synthase III (319 aa).

Catalysis depends on residues Cys-115 and His-246. Positions 247-251 (QANLR) are ACP-binding. The active site involves Asn-276.

This sequence belongs to the thiolase-like superfamily. FabH family. Homodimer.

It localises to the cytoplasm. It carries out the reaction malonyl-[ACP] + acetyl-CoA + H(+) = 3-oxobutanoyl-[ACP] + CO2 + CoA. The protein operates within lipid metabolism; fatty acid biosynthesis. In terms of biological role, catalyzes the condensation reaction of fatty acid synthesis by the addition to an acyl acceptor of two carbons from malonyl-ACP. Catalyzes the first condensation reaction which initiates fatty acid synthesis and may therefore play a role in governing the total rate of fatty acid production. Possesses both acetoacetyl-ACP synthase and acetyl transacylase activities. Its substrate specificity determines the biosynthesis of branched-chain and/or straight-chain of fatty acids. The sequence is that of Beta-ketoacyl-[acyl-carrier-protein] synthase III from Coxiella burnetii (strain RSA 331 / Henzerling II).